Consider the following 89-residue polypeptide: MSLEKTSKAAIVADNARGANDTGSPEVQVALLTARINDLNGHFKAHSKDHHSRRGLIMMVNRRKSLLSYLKNKDATRYRDLIAKLGLRK.

The protein belongs to the universal ribosomal protein uS15 family. Part of the 30S ribosomal subunit. Forms a bridge to the 50S subunit in the 70S ribosome, contacting the 23S rRNA.

Its function is as follows. One of the primary rRNA binding proteins, it binds directly to 16S rRNA where it helps nucleate assembly of the platform of the 30S subunit by binding and bridging several RNA helices of the 16S rRNA. Forms an intersubunit bridge (bridge B4) with the 23S rRNA of the 50S subunit in the ribosome. The sequence is that of Small ribosomal subunit protein uS15 from Herminiimonas arsenicoxydans.